We begin with the raw amino-acid sequence, 1252 residues long: Myosin-1 (1252 aa).

Positions 1 to 27 are disordered; it reads MAPSKKAGKKVTPASKKSAGQGKVAKA. The Myosin motor domain maps to 38–712; that stretch reads VGVSDMTLLT…TLFALETMRD (675 aa). 128-135 contributes to the ATP binding site; that stretch reads GESGAGKT. Residue Ser356 is modified to Phosphoserine. The interval 403 to 485 is actin-binding; it reads IIGILDIFGF…PGIFAALNDA (83 aa). IQ domains follow at residues 716 to 736 and 737 to 762; these read HNMA…KHEC and ARRI…YGHQ. A TH1 domain is found at 770-953; that stretch reads RRRFSLLSYR…TVHVASGEPP (184 aa). Disordered stretches follow at residues 945–1049 and 1103–1228; these read VHVA…PETP and PPKA…PATA. 2 stretches are compositionally biased toward pro residues: residues 989–999 and 1028–1046; these read RSVPKPKPVAQ and RPPP…PAKP. The SH3 domain occupies 1046 to 1104; the sequence is PETPMYRAKFAFEGQEGEMSLKKDDVVELVEKDDNGWWLVKMDGVEGWAPNNYLELVPP. Positions 1162–1175 are enriched in polar residues; the sequence is ADTTPASSRPSSAI. Pro residues predominate over residues 1178–1193; sequence KPPPPVAAKPKPPVIP. The segment covering 1194-1203 has biased composition (low complexity); sequence VKPSVSAKGP. The segment covering 1204-1215 has biased composition (pro residues); the sequence is AKPPIPTAPRPP. Positions 1216–1228 are enriched in low complexity; sequence AASTSRSSKPATA.

The protein belongs to the TRAFAC class myosin-kinesin ATPase superfamily. Myosin family. In terms of processing, phosphorylation of the TEDS site (Ser-356) is required for the polarization of the actin cytoskeleton. Phosphorylation probably activates the myosin-I ATPase activity.

It is found in the cytoplasm. The protein resides in the cytoskeleton. Its subcellular location is the actin patch. Functionally, type-I myosin implicated in the organization of the actin cytoskeleton. Required for proper actin cytoskeleton polarization. At the cell cortex, assembles in patch-like structures together with proteins from the actin-polymerizing machinery and promotes actin assembly. Functions as actin nucleation-promoting factor (NPF) for the Arp2/3 complex. This is Myosin-1 (MYO1) from Laccaria bicolor (strain S238N-H82 / ATCC MYA-4686) (Bicoloured deceiver).